We begin with the raw amino-acid sequence, 493 residues long: MHTLVFLSTRQVLQCQPAACQALPLLPRELFPLLFKVAFMDKKTAVLRELVHTWPFPLLSFQQLLQECAHCSRALLQERLSTESMQAVILGLTARIHAREAEAGTQPVCRKHTLRVLDMTGLLDDGVEQDPGTMSMWDCTAAVARTCIAQQQVGTAKPGLSPVPVEIRVDLRVNRASYTFLREALQSSVDSLLRLCCRDLRAEDLPMRNTVALLQLLDAGCLRRIDLRFNNLGLRGLSVIIPHVARFQHLASLRLHYVHGDSRQPSVDGEDNFRYFLAQMGRFICLRELSIGSSLLSGRLDQLLSTLQRPLESLELAFCALLPEDLRFLAQSSHAAHLKKLDLSGNDLSGNQLTPFQGLLQAVAATLLHLELTECQIADAQLLATLPTLTRCASLRYLGLYGNPLSMAGLKELLRDSVIQAELRTVVHPFPVDCYEGLPWPPPASVLLEASINEEKFARVEAELHQLLLASGRAHVLWTTDIYGRLAADYFNL.

The stretch at 111 to 146 (KHTLRVLDMTGLLDDGVEQDPGTMSMWDCTAAVART) is one LRR 1; degenerate repeat. Residues 194-218 (RLCCRDLRAEDLPMRNTVALLQLLD) form an LRR 2; degenerate repeat. An LRR 3; degenerate repeat occupies 219-246 (AGCLRRIDLRFNNLGLRGLSVIIPHVAR). One copy of the LRR 4; degenerate repeat lies at 247 to 282 (FQHLASLRLHYVHGDSRQPSVDGEDNFRYFLAQMGR). 5 LRR repeats span residues 283–307 (FICL…LSTL), 308–339 (QRPL…AHLK), 340–360 (KLDL…QGLL), 364–391 (AATL…TLTR), and 392–416 (CASL…LLRD).

Belongs to the PRAME family. LRRC14 subfamily. As to quaternary structure, interacts with IKBKB; disrupts IKBKB-IKBKG interaction preventing I-kappa-B-kinase (IKK) core complex formation and leading to a decrease of IKBKB phosphorylation and NF-kappaB activation. Interacts with CHUK.

Its subcellular location is the cytoplasm. In terms of biological role, negatively regulates Toll-like receptor-mediated NF-kappa-B signaling by disrupting IKK core complex formation through interaction with IKBKB. The protein is Leucine-rich repeat-containing protein 14 of Rattus norvegicus (Rat).